We begin with the raw amino-acid sequence, 511 residues long: Maturase K (511 aa).

It belongs to the intron maturase 2 family. MatK subfamily.

It is found in the plastid. The protein resides in the chloroplast. Usually encoded in the trnK tRNA gene intron. Probably assists in splicing its own and other chloroplast group II introns. In Nardus stricta (Mat-grass), this protein is Maturase K.